Reading from the N-terminus, the 77-residue chain is Acyl carrier protein (77 aa).

Positions 2 to 77 (SSIDKRIKEI…DAIDYITDHT (76 aa)) constitute a Carrier domain. The residue at position 37 (serine 37) is an O-(pantetheine 4'-phosphoryl)serine.

It belongs to the acyl carrier protein (ACP) family. Post-translationally, 4'-phosphopantetheine is transferred from CoA to a specific serine of apo-ACP by AcpS. This modification is essential for activity because fatty acids are bound in thioester linkage to the sulfhydryl of the prosthetic group.

It localises to the cytoplasm. It participates in lipid metabolism; fatty acid biosynthesis. Carrier of the growing fatty acid chain in fatty acid biosynthesis. The chain is Acyl carrier protein from Geotalea daltonii (strain DSM 22248 / JCM 15807 / FRC-32) (Geobacter daltonii).